A 78-amino-acid chain; its full sequence is Protein SlyX homolog (78 aa).

This sequence belongs to the SlyX family.

The sequence is that of Protein SlyX homolog from Photobacterium profundum (strain SS9).